The chain runs to 150 residues: Endoribonuclease YbeY (150 aa).

Histidine 115, histidine 119, and histidine 125 together coordinate Zn(2+).

It belongs to the endoribonuclease YbeY family. Zn(2+) serves as cofactor.

It is found in the cytoplasm. Its function is as follows. Single strand-specific metallo-endoribonuclease involved in late-stage 70S ribosome quality control and in maturation of the 3' terminus of the 16S rRNA. The sequence is that of Endoribonuclease YbeY from Aquifex aeolicus (strain VF5).